Reading from the N-terminus, the 234-residue chain is tRNA (guanine-N(1)-)-methyltransferase (234 aa).

S-adenosyl-L-methionine contacts are provided by residues Gly112 and 132-137; that span reads IGDFIL.

It belongs to the RNA methyltransferase TrmD family. As to quaternary structure, homodimer.

It localises to the cytoplasm. It catalyses the reaction guanosine(37) in tRNA + S-adenosyl-L-methionine = N(1)-methylguanosine(37) in tRNA + S-adenosyl-L-homocysteine + H(+). Specifically methylates guanosine-37 in various tRNAs. This Campylobacter jejuni subsp. doylei (strain ATCC BAA-1458 / RM4099 / 269.97) protein is tRNA (guanine-N(1)-)-methyltransferase.